The chain runs to 321 residues: MSKPIVMERGVKYRDADKMALIPVKNVVTERDALLRKPEWMKIKLPADSTRIQGIKAAMRKNGLHSVCEEASCPNLAECFNHGTATFMILGAICTRRCPFCDVAHGRPVAPDAEEPQKLAQTIADMALRYVVITSVDRDDLRDGGAQHFADCITAIRAKSPEIKIETLVPDFRGRMDRALDILNATPPDVFNHNLENVPRIYRQVRPGADYNWSLKLLERFKEAHPEIPTKSGLMVGLGETNAEIIEVMRDLRRHGVTMLTLGQYLQPSRHHLPVQRYVSPEEFDEMKAEALAMGFTHAACGPFVRSSYHADLQAKGMEVK.

[4Fe-4S] cluster is bound by residues Cys-68, Cys-73, Cys-79, Cys-94, Cys-98, Cys-101, and Ser-308. The Radical SAM core domain occupies 80–297; the sequence is FNHGTATFMI…KAEALAMGFT (218 aa).

This sequence belongs to the radical SAM superfamily. Lipoyl synthase family. [4Fe-4S] cluster is required as a cofactor.

The protein resides in the cytoplasm. The catalysed reaction is [[Fe-S] cluster scaffold protein carrying a second [4Fe-4S](2+) cluster] + N(6)-octanoyl-L-lysyl-[protein] + 2 oxidized [2Fe-2S]-[ferredoxin] + 2 S-adenosyl-L-methionine + 4 H(+) = [[Fe-S] cluster scaffold protein] + N(6)-[(R)-dihydrolipoyl]-L-lysyl-[protein] + 4 Fe(3+) + 2 hydrogen sulfide + 2 5'-deoxyadenosine + 2 L-methionine + 2 reduced [2Fe-2S]-[ferredoxin]. It participates in protein modification; protein lipoylation via endogenous pathway; protein N(6)-(lipoyl)lysine from octanoyl-[acyl-carrier-protein]: step 2/2. In terms of biological role, catalyzes the radical-mediated insertion of two sulfur atoms into the C-6 and C-8 positions of the octanoyl moiety bound to the lipoyl domains of lipoate-dependent enzymes, thereby converting the octanoylated domains into lipoylated derivatives. The polypeptide is Lipoyl synthase (Salmonella paratyphi A (strain AKU_12601)).